The sequence spans 155 residues: Probable cyclic pyranopterin monophosphate synthase (155 aa).

Residues 74–76 (MCH) and 110–111 (ME) contribute to the substrate site. The active site involves D125.

Belongs to the MoaC family. In terms of assembly, homohexamer; trimer of dimers.

The enzyme catalyses (8S)-3',8-cyclo-7,8-dihydroguanosine 5'-triphosphate = cyclic pyranopterin phosphate + diphosphate. Its pathway is cofactor biosynthesis; molybdopterin biosynthesis. Catalyzes the conversion of (8S)-3',8-cyclo-7,8-dihydroguanosine 5'-triphosphate to cyclic pyranopterin monophosphate (cPMP). This is Probable cyclic pyranopterin monophosphate synthase from Methanoregula boonei (strain DSM 21154 / JCM 14090 / 6A8).